The primary structure comprises 542 residues: ATP synthase subunit alpha (542 aa).

Residue 173–180 (GDRQTGKT) participates in ATP binding. The tract at residues 518-542 (PLVEKKPDEKHTTPVEQEKIVAGEK) is disordered. Positions 519–542 (LVEKKPDEKHTTPVEQEKIVAGEK) are enriched in basic and acidic residues.

Belongs to the ATPase alpha/beta chains family. In terms of assembly, F-type ATPases have 2 components, CF(1) - the catalytic core - and CF(0) - the membrane proton channel. CF(1) has five subunits: alpha(3), beta(3), gamma(1), delta(1), epsilon(1). CF(0) has three main subunits: a(1), b(2) and c(9-12). The alpha and beta chains form an alternating ring which encloses part of the gamma chain. CF(1) is attached to CF(0) by a central stalk formed by the gamma and epsilon chains, while a peripheral stalk is formed by the delta and b chains.

Its subcellular location is the cell membrane. It catalyses the reaction ATP + H2O + 4 H(+)(in) = ADP + phosphate + 5 H(+)(out). In terms of biological role, produces ATP from ADP in the presence of a proton gradient across the membrane. The alpha chain is a regulatory subunit. The sequence is that of ATP synthase subunit alpha from Bifidobacterium adolescentis (strain ATCC 15703 / DSM 20083 / NCTC 11814 / E194a).